The chain runs to 185 residues: UPF0301 protein MS0260 (185 aa).

This sequence belongs to the UPF0301 (AlgH) family.

This Mannheimia succiniciproducens (strain KCTC 0769BP / MBEL55E) protein is UPF0301 protein MS0260.